Here is a 286-residue protein sequence, read N- to C-terminus: Ribosomal RNA small subunit methyltransferase H (286 aa).

Residues 17 to 19 (AGH), Asp-36, Phe-63, Asp-84, and Gln-91 each bind S-adenosyl-L-methionine.

Belongs to the methyltransferase superfamily. RsmH family.

The protein resides in the cytoplasm. The catalysed reaction is cytidine(1402) in 16S rRNA + S-adenosyl-L-methionine = N(4)-methylcytidine(1402) in 16S rRNA + S-adenosyl-L-homocysteine + H(+). Specifically methylates the N4 position of cytidine in position 1402 (C1402) of 16S rRNA. The chain is Ribosomal RNA small subunit methyltransferase H from Metamycoplasma arthritidis (strain 158L3-1) (Mycoplasma arthritidis).